An 89-amino-acid polypeptide reads, in one-letter code: Small ribosomal subunit protein uS15 (89 aa).

It belongs to the universal ribosomal protein uS15 family. As to quaternary structure, part of the 30S ribosomal subunit. Forms a bridge to the 50S subunit in the 70S ribosome, contacting the 23S rRNA.

In terms of biological role, one of the primary rRNA binding proteins, it binds directly to 16S rRNA where it helps nucleate assembly of the platform of the 30S subunit by binding and bridging several RNA helices of the 16S rRNA. Its function is as follows. Forms an intersubunit bridge (bridge B4) with the 23S rRNA of the 50S subunit in the ribosome. This chain is Small ribosomal subunit protein uS15, found in Bacillus anthracis (strain CDC 684 / NRRL 3495).